A 696-amino-acid chain; its full sequence is UvrABC system protein C (696 aa).

In terms of domain architecture, GIY-YIG spans 16 to 95 (TEPGVYKFRD…IKRFDPRFNV (80 aa)). The 36-residue stretch at 208-243 (DKVTRKLNADMMAAAEELDFERAARLRDDLEAIDKV) folds into the UVR domain.

Belongs to the UvrC family. Interacts with UvrB in an incision complex.

Its subcellular location is the cytoplasm. The UvrABC repair system catalyzes the recognition and processing of DNA lesions. UvrC both incises the 5' and 3' sides of the lesion. The N-terminal half is responsible for the 3' incision and the C-terminal half is responsible for the 5' incision. The sequence is that of UvrABC system protein C from Corynebacterium glutamicum (strain R).